A 290-amino-acid chain; its full sequence is UPF0761 membrane protein YihY (290 aa).

6 helical membrane passes run 44–64 (LLSLVPLVAVVFALFAAFPMF), 104–124 (VGACGLIVTALLLMYSIDSAL), 140–160 (FAVYWMILTLGPLLAGASLAI), 183–203 (IFPLLLSWISFWLLYSIVPTI), 210–230 (AIVGAFVAALLFEAGKKGFAL), and 244–264 (VLAVIPILFVWVYWTWCIVLL).

Belongs to the UPF0761 family.

It is found in the cell inner membrane. This chain is UPF0761 membrane protein YihY, found in Escherichia coli O7:K1 (strain IAI39 / ExPEC).